A 387-amino-acid polypeptide reads, in one-letter code: S-adenosylmethionine synthase (387 aa).

Histidine 16 serves as a coordination point for ATP. Position 18 (aspartate 18) interacts with Mg(2+). Glutamate 44 is a binding site for K(+). 2 residues coordinate L-methionine: glutamate 57 and glutamine 100. The interval 100–110 (QSADIAVGVDE) is flexible loop. ATP contacts are provided by residues 165 to 167 (DAK), aspartate 241, 247 to 248 (RK), alanine 264, and lysine 268. Residue aspartate 241 coordinates L-methionine. Residue lysine 272 participates in L-methionine binding.

This sequence belongs to the AdoMet synthase family. Homotetramer; dimer of dimers. It depends on Mg(2+) as a cofactor. The cofactor is K(+).

The protein resides in the cytoplasm. The enzyme catalyses L-methionine + ATP + H2O = S-adenosyl-L-methionine + phosphate + diphosphate. It functions in the pathway amino-acid biosynthesis; S-adenosyl-L-methionine biosynthesis; S-adenosyl-L-methionine from L-methionine: step 1/1. Its function is as follows. Catalyzes the formation of S-adenosylmethionine (AdoMet) from methionine and ATP. The overall synthetic reaction is composed of two sequential steps, AdoMet formation and the subsequent tripolyphosphate hydrolysis which occurs prior to release of AdoMet from the enzyme. In Marinomonas sp. (strain MWYL1), this protein is S-adenosylmethionine synthase.